The chain runs to 823 residues: ATP-dependent DNA helicase At3g02060, chloroplastic (823 aa).

The N-terminal 53 residues, methionine 1–serine 53, are a transit peptide targeting the chloroplast. The Helicase ATP-binding domain maps to leucine 285–isoleucine 447. An ATP-binding site is contributed by glycine 298–threonine 305. The short motif at aspartate 400–glutamine 403 is the DEEQ box element. One can recognise a Helicase C-terminal domain in the interval arginine 465–glycine 622.

The protein belongs to the helicase family.

Its subcellular location is the plastid. The protein resides in the chloroplast. It catalyses the reaction ATP + H2O = ADP + phosphate + H(+). The sequence is that of ATP-dependent DNA helicase At3g02060, chloroplastic from Arabidopsis thaliana (Mouse-ear cress).